The primary structure comprises 617 residues: 1-deoxy-D-xylulose-5-phosphate synthase (617 aa).

Thiamine diphosphate-binding positions include His-76 and 117–119 (GHS). Mg(2+) is bound at residue Asp-148. Thiamine diphosphate is bound by residues 149-150 (GA), Asn-177, Tyr-285, and Glu-366. Asn-177 contributes to the Mg(2+) binding site.

The protein belongs to the transketolase family. DXPS subfamily. Homodimer. It depends on Mg(2+) as a cofactor. Requires thiamine diphosphate as cofactor.

It catalyses the reaction D-glyceraldehyde 3-phosphate + pyruvate + H(+) = 1-deoxy-D-xylulose 5-phosphate + CO2. The protein operates within metabolic intermediate biosynthesis; 1-deoxy-D-xylulose 5-phosphate biosynthesis; 1-deoxy-D-xylulose 5-phosphate from D-glyceraldehyde 3-phosphate and pyruvate: step 1/1. Its function is as follows. Catalyzes the acyloin condensation reaction between C atoms 2 and 3 of pyruvate and glyceraldehyde 3-phosphate to yield 1-deoxy-D-xylulose-5-phosphate (DXP). This is 1-deoxy-D-xylulose-5-phosphate synthase from Histophilus somni (strain 2336) (Haemophilus somnus).